The following is a 272-amino-acid chain: S-adenosylmethionine decarboxylase proenzyme (272 aa).

S122 serves as the catalytic Schiff-base intermediate with substrate; via pyruvic acid. S122 bears the Pyruvic acid (Ser); by autocatalysis mark. H127 acts as the Proton acceptor; for processing activity in catalysis. C150 functions as the Proton donor; for catalytic activity in the catalytic mechanism.

This sequence belongs to the prokaryotic AdoMetDC family. Type 2 subfamily. Heterooctamer of four alpha and four beta chains arranged as a tetramer of alpha/beta heterodimers. Pyruvate is required as a cofactor. Post-translationally, is synthesized initially as an inactive proenzyme. Formation of the active enzyme involves a self-maturation process in which the active site pyruvoyl group is generated from an internal serine residue via an autocatalytic post-translational modification. Two non-identical subunits are generated from the proenzyme in this reaction, and the pyruvate is formed at the N-terminus of the alpha chain, which is derived from the carboxyl end of the proenzyme. The post-translation cleavage follows an unusual pathway, termed non-hydrolytic serinolysis, in which the side chain hydroxyl group of the serine supplies its oxygen atom to form the C-terminus of the beta chain, while the remainder of the serine residue undergoes an oxidative deamination to produce ammonia and the pyruvoyl group blocking the N-terminus of the alpha chain.

It catalyses the reaction S-adenosyl-L-methionine + H(+) = S-adenosyl 3-(methylsulfanyl)propylamine + CO2. Its pathway is amine and polyamine biosynthesis; S-adenosylmethioninamine biosynthesis; S-adenosylmethioninamine from S-adenosyl-L-methionine: step 1/1. In terms of biological role, catalyzes the decarboxylation of S-adenosylmethionine to S-adenosylmethioninamine (dcAdoMet), the propylamine donor required for the synthesis of the polyamines spermine and spermidine from the diamine putrescine. This is S-adenosylmethionine decarboxylase proenzyme from Clostridium botulinum (strain Alaska E43 / Type E3).